The following is a 179-amino-acid chain: Ribosome maturation factor RimM (179 aa).

Residues 95–174 form the PRC barrel domain; the sequence is KDEFFYFDIL…QIFCTQDAFL (80 aa).

It belongs to the RimM family. In terms of assembly, binds ribosomal protein uS19.

Its subcellular location is the cytoplasm. Functionally, an accessory protein needed during the final step in the assembly of 30S ribosomal subunit, possibly for assembly of the head region. Essential for efficient processing of 16S rRNA. May be needed both before and after RbfA during the maturation of 16S rRNA. It has affinity for free ribosomal 30S subunits but not for 70S ribosomes. This chain is Ribosome maturation factor RimM, found in Campylobacter jejuni subsp. jejuni serotype O:2 (strain ATCC 700819 / NCTC 11168).